Here is a 423-residue protein sequence, read N- to C-terminus: TPR repeat-containing protein YpiA (423 aa).

9 TPR repeats span residues 33–66 (DEDK…YPNE), 67–100 (TELT…DPSY), 135–168 (PVID…QSEI), 171–204 (VNVH…NPDP), 238–271 (TSLY…DEYN), 272–305 (KELF…DPGF), 306–339 (VEAL…GEED), 340–373 (PKYN…YRED), and 374–407 (RDFL…DGAN).

In terms of assembly, interacts with the RNA polymerase core.

The protein is TPR repeat-containing protein YpiA (ypiA) of Bacillus subtilis (strain 168).